A 311-amino-acid chain; its full sequence is Probable manganese-dependent inorganic pyrophosphatase (311 aa).

Positions 9, 13, 15, 77, 99, and 151 each coordinate Mn(2+).

The protein belongs to the PPase class C family. In terms of assembly, homodimer. Mn(2+) is required as a cofactor.

It is found in the cytoplasm. It catalyses the reaction diphosphate + H2O = 2 phosphate + H(+). This chain is Probable manganese-dependent inorganic pyrophosphatase (ppaC), found in Streptococcus gordonii (strain Challis / ATCC 35105 / BCRC 15272 / CH1 / DL1 / V288).